The chain runs to 714 residues: Sodium-dependent acetylcholine transporter (714 aa).

A disordered region spans residues 1 to 21 (MSVSSNDPEQRNGRGMASGNN). The Cytoplasmic portion of the chain corresponds to 1 to 74 (MSVSSNDPEQ…GNWSNKSDYL (74 aa)). 3 helical membrane passes run 75–95 (LAVI…FLVF), 100–120 (AAFL…MFFM), and 152–172 (ISGF…FYLI). The Extracellular portion of the chain corresponds to 173–257 (NSFSFSIPWS…LSKGVDDFGT (85 aa)). N-linked (GlcNAc...) asparagine glycosylation is found at N192, N205, N211, and N222. Helical transmembrane passes span 258-278 (LNWY…LCLF), 287-307 (VVYV…TRLL), 336-356 (AAVQ…TIAS), 368-388 (IWLV…LTFS), 422-442 (AGVS…LLVV), 476-496 (VCAL…LFWM), 502-522 (FVLT…INWV), 548-568 (ILFK…LWLD), and 584-604 (ILTA…VGIW). The Cytoplasmic segment spans residues 605-714 (QFCIAKGTIT…IPKFERETAI (110 aa)).

Belongs to the sodium:neurotransmitter symporter (SNF) (TC 2.A.22) family. As to quaternary structure, interacts with stn-1; part of the DGC. Body wall, and vulval and enteric muscles.

The protein localises to the cell membrane. The protein resides in the postsynaptic cell membrane. Mediates sodium-dependent uptake of acetylcholine at neuromuscular junctions during periods of increased synaptic activity, may also prevent spillover to adjacent synaptic sites. Not involved in the uptake of other neurotransmitters (GABA, glycine, proline and glutamate) and there was also no inhibition of uptake by adding an excess of other candidate substrates (GABA, glycine, taurine, creatine, proline, alanine, carnitine, glutamate and betaine). Required for muscle integrity; altered transport of acetylcholine due to loss of dystrophin-glycoprotein complex (DGC) function results in muscle degeneration. This is Sodium-dependent acetylcholine transporter from Caenorhabditis elegans.